A 521-amino-acid polypeptide reads, in one-letter code: Alkyl hydroperoxide reductase subunit F (521 aa).

Position 213 to 228 (213 to 228 (DVLVVGGGPAGAAAAI)) interacts with FAD. A disulfide bridge links Cys-344 with Cys-347. 356–370 (RVAVIGGGNSGVEAA) is an NAD(+) binding site. FAD is bound at residue 477-487 (TSLPGIFAAGD).

The protein belongs to the class-II pyridine nucleotide-disulfide oxidoreductase family. In terms of assembly, homodimer. Requires FAD as cofactor.

Its function is as follows. Serves to protect the cell against DNA damage by alkyl hydroperoxides. It can use either NADH or NADPH as electron donor for direct reduction of redox dyes or of alkyl hydroperoxides when combined with the AhpC protein. In Pseudomonas aeruginosa (strain ATCC 15692 / DSM 22644 / CIP 104116 / JCM 14847 / LMG 12228 / 1C / PRS 101 / PAO1), this protein is Alkyl hydroperoxide reductase subunit F (ahpF).